The sequence spans 424 residues: UPF0229 protein Avin_46880 (424 aa).

The tract at residues 57-108 is disordered; it reads RDIDEPVLHHGRGGKQTIVHPGNKEFTAGERIPRPSGGGGGGSGSGKASNSG. The segment covering 92 to 101 has biased composition (gly residues); that stretch reads SGGGGGGSGS.

Belongs to the UPF0229 family.

In Azotobacter vinelandii (strain DJ / ATCC BAA-1303), this protein is UPF0229 protein Avin_46880.